A 1411-amino-acid polypeptide reads, in one-letter code: DNA-directed RNA polymerase subunit beta' (1411 aa).

Residues Cys-69, Cys-71, Cys-84, and Cys-87 each coordinate Zn(2+). Positions 461, 463, and 465 each coordinate Mg(2+). Cys-809, Cys-883, Cys-890, and Cys-893 together coordinate Zn(2+).

The protein belongs to the RNA polymerase beta' chain family. In terms of assembly, the RNAP catalytic core consists of 2 alpha, 1 beta, 1 beta' and 1 omega subunit. When a sigma factor is associated with the core the holoenzyme is formed, which can initiate transcription. Mg(2+) is required as a cofactor. Zn(2+) serves as cofactor.

It carries out the reaction RNA(n) + a ribonucleoside 5'-triphosphate = RNA(n+1) + diphosphate. Functionally, DNA-dependent RNA polymerase catalyzes the transcription of DNA into RNA using the four ribonucleoside triphosphates as substrates. The polypeptide is DNA-directed RNA polymerase subunit beta' (Ehrlichia ruminantium (strain Welgevonden)).